Reading from the N-terminus, the 397-residue chain is MSLLENIRMALSSVLAHKMRSILTMLGIIIGVGSVIVVVAVGQGGEQMLKQSISGPGNTVELYYMPSDEELASNPNAAAESTFTENDIKGLKGIEGIKQVVASTSESMKARYHEEETDATVNGINDGYMNVNSLKIESGRTFTDNDFLAGNRVGIISQKMAKELFDKTSPLGEVVWINGQPVEIIGVLKKVTGLLSFDLSEMYVPFNMMKSSFGTSDFSNVSLQVESADDIKSAGKEAAQLVNDNHGTEDSYQVMNMEEIAAGIGKVTAIMTTIIGSIAGISLLVGGIGVMNIMLVSVTERTREIGIRKSLGATRGQILTQFLIESVVLTLIGGLVGIGIGYGGAALVSAIAGWPSLISWQVVCGGVLFSMLIGVIFGMLPANKAAKLDPIEALRYE.

The next 4 membrane-spanning stretches (helical) occupy residues 22-42 (ILTMLGIIIGVGSVIVVVAVG), 270-290 (IMTTIIGSIAGISLLVGGIGV), 327-347 (VVLTLIGGLVGIGIGYGGAAL), and 362-382 (VVCGGVLFSMLIGVIFGMLPA).

Belongs to the ABC-4 integral membrane protein family. Part of a complex composed of YknX, YknY and YknZ. The complex interacts with YknW.

The protein localises to the cell membrane. It localises to the membrane raft. Its function is as follows. Part of an unusual four-component transporter, which is required for protection against the killing factor SdpC (sporulation-delaying protein). This is an uncharacterized protein from Bacillus subtilis (strain 168).